Reading from the N-terminus, the 283-residue chain is Plasma membrane ascorbate-dependent reductase CYBRD1 (283 aa).

The Cytoplasmic segment spans residues 1-5 (MEGYK). Residues 6 to 30 (SFLAFLVSSLLLGFLGVIFTLVWVL) traverse the membrane as a helical segment. The Cytochrome b561 domain maps to 13–218 (SSLLLGFLGV…FGGLVVWMVT (206 aa)). Over 31 to 45 (HWREGLGWDGGAAEF) the chain is Extracellular. Residues 46 to 67 (NWHPVLVTSGFIFIQGIAIIVY) form a helical membrane-spanning segment. Heme b contacts are provided by His48, Arg68, and Lys77. Over 68–76 (RLPWTWKCS) the chain is Cytoplasmic. Lys77 and Lys81 together coordinate L-ascorbate. Residues 77–103 (KLLMKFIHAGLHLTALIFTIVALVAVF) traverse the membrane as a helical segment. His84 contributes to the heme b binding site. At 104–116 (DFHNAKNIPNMYS) the chain is on the extracellular side. His106 provides a ligand contact to Fe(3+). Residues 113 to 116 (NMYS) and His118 each bind heme b. Residues 117-142 (LHSWIGLTVVILYALQLVLGVSIYLL) traverse the membrane as a helical segment. The Cytoplasmic segment spans residues 143–149 (PFASNTL). Arg150 contributes to the L-ascorbate binding site. Residues 150–177 (RAALMPVHVYSGLFIFGTVIATALMGIT) traverse the membrane as a helical segment. Heme b contacts are provided by His157 and Glu178. The Extracellular portion of the chain corresponds to 178-195 (EKLIFSLKEPPYSKLPPE). The chain crosses the membrane as a helical span at residues 196 to 220 (AIFVNTFGLLILVFGGLVVWMVTTP). The Cytoplasmic segment spans residues 221–283 (AWKRPREQGM…LDEAGQRSTM (63 aa)). Lys223 is a heme b binding site. The segment at 234-262 (SPTVSSPDETEEGSTITDCSNTEKSDVEL) is disordered. Over residues 235 to 253 (PTVSSPDETEEGSTITDCS) the composition is skewed to polar residues.

In terms of assembly, homodimer. Heme b is required as a cofactor.

It is found in the cell membrane. The protein localises to the apical cell membrane. The catalysed reaction is Fe(3+)(out) + L-ascorbate(in) = monodehydro-L-ascorbate radical(in) + Fe(2+)(out) + H(+). It catalyses the reaction Cu(2+)(out) + L-ascorbate(in) = Cu(+)(out) + monodehydro-L-ascorbate radical(in) + H(+). It carries out the reaction monodehydro-L-ascorbate radical(out) + L-ascorbate(in) = monodehydro-L-ascorbate radical(in) + L-ascorbate(out). Its function is as follows. Plasma membrane reductase that uses cytoplasmic ascorbate as an electron donor to reduce extracellular Fe(3+) into Fe(2+). It is also able to reduce extracellular monodehydro-L-ascorbate and may be involved in extracellular ascorbate regeneration. May also function as a cupric transmembrane reductase. The polypeptide is Plasma membrane ascorbate-dependent reductase CYBRD1 (cybrd1) (Xenopus laevis (African clawed frog)).